The primary structure comprises 177 residues: Inner membrane-spanning protein YciB (177 aa).

A run of 5 helical transmembrane segments spans residues 22-42 (IFIA…IHWI), 50-70 (ISLF…FFHN), 76-96 (WKIT…QFFT), 121-141 (FIWS…AYYF), and 149-169 (FKVF…SIYI).

Belongs to the YciB family.

Its subcellular location is the cell inner membrane. Its function is as follows. Plays a role in cell envelope biogenesis, maintenance of cell envelope integrity and membrane homeostasis. The chain is Inner membrane-spanning protein YciB from Buchnera aphidicola subsp. Acyrthosiphon pisum (strain 5A).